A 117-amino-acid chain; its full sequence is uncharacterized protein (117 aa).

The segment at 1 to 20 (METKKLIGKPLQPARPVRHL) is disordered.

This is an uncharacterized protein from Homo sapiens (Human).